The sequence spans 80 residues: Putative membrane protein insertion efficiency factor (80 aa).

It belongs to the UPF0161 family.

Its subcellular location is the cell membrane. Its function is as follows. Could be involved in insertion of integral membrane proteins into the membrane. The chain is Putative membrane protein insertion efficiency factor from Limosilactobacillus fermentum (strain NBRC 3956 / LMG 18251) (Lactobacillus fermentum).